The chain runs to 330 residues: D-lactate dehydrogenase (330 aa).

NAD(+) is bound by residues 156–157, Asp-176, 206–207, 233–235, and Asp-259; these read RI, VP, and AAR. Arg-235 is an active-site residue. The active site involves Glu-264. The active-site Proton donor is the His-296.

This sequence belongs to the D-isomer specific 2-hydroxyacid dehydrogenase family.

It carries out the reaction (R)-lactate + NAD(+) = pyruvate + NADH + H(+). This chain is D-lactate dehydrogenase (ldhD), found in Staphylococcus epidermidis (strain ATCC 35984 / DSM 28319 / BCRC 17069 / CCUG 31568 / BM 3577 / RP62A).